The chain runs to 205 residues: MDKKPCNSQDVEVRKGPWTMEEDLILINYIANHGEGVWNSLARSAGLKRTGKSCRLRWLNYLRPDVRRGNITPEEQLLIMELHAKWGNRWSKIAKTLPGRTDNEIKNYWRTRIQKHMEQGDQSSSTTFNNGQMNLDHSCNDQASSSQMSACGPVVDHTAVDQSSYSPHSFNGNDHTFQAPFPTDQSNDNMWSMEDFWSMQLLNGD.

2 consecutive HTH myb-type domains span residues 10–62 and 63–117; these read DVEV…LNYL and RPDV…QKHM. 2 consecutive DNA-binding regions (H-T-H motif) follow at residues 38 to 62 and 90 to 113; these read WNSLARSAGLKRTGKSCRLRWLNYL and WSKIAKTLPGRTDNEIKNYWRTRI.

As to expression, expressed only in flowers.

Its subcellular location is the nucleus. Its function is as follows. Transcription factor. This Antirrhinum majus (Garden snapdragon) protein is Myb-related protein 305.